Reading from the N-terminus, the 384-residue chain is Neuropeptide Y receptor type 1 (384 aa).

At 1–44 (MNSTLFSQVENHSVHSNFSEKNAQLLAFENDDCHLPLAMIFTLA) the chain is on the extracellular side. 3 N-linked (GlcNAc...) asparagine glycosylation sites follow: Asn-2, Asn-11, and Asn-17. A helical membrane pass occupies residues 45-65 (LAYGAVIILGVSGNLALIIII). The Cytoplasmic segment spans residues 66–76 (LKQKEMRNVTN). The chain crosses the membrane as a helical span at residues 77-97 (ILIVNLSFSDLLVAIMCLPFT). The Extracellular portion of the chain corresponds to 98–116 (FVYTLMDHWVFGEAMCKLN). Cys-113 and Cys-198 are oxidised to a cystine. A helical transmembrane segment spans residues 117-137 (PFVQCVSITVSIFSLVLIAVE). The Cytoplasmic segment spans residues 138–154 (RHQLIINPRGWRPNNRH). The chain crosses the membrane as a helical span at residues 155–175 (AYVGIAVIWVLAVASSLPFLI). The Extracellular segment spans residues 176–211 (YQVMTDEPFQNVTLDAYKDKYVCFDQFPSDSHRLSY). A helical transmembrane segment spans residues 212–232 (TTLLLVLQYFGPLCFIFICYF). The Cytoplasmic portion of the chain corresponds to 233 to 260 (KIYIRLKRRNNMMDKMRDNKYRSSETKR). The helical transmembrane segment at 261–281 (INIMLLSIVVAFAVCWLPLTI) threads the bilayer. The Extracellular portion of the chain corresponds to 282-299 (FNTVFDWNHQIIATCNHN). A helical transmembrane segment spans residues 300-320 (LLFLLCHLTAMISTCVNPIFY). Residues 321–384 (GFLNKNFQRD…INNNDDNEKI (64 aa)) are Cytoplasmic-facing. Cys-338 is lipidated: S-palmitoyl cysteine. Ser-368 carries the post-translational modification Phosphoserine.

It belongs to the G-protein coupled receptor 1 family.

It is found in the cell membrane. Its function is as follows. Receptor for neuropeptide Y and peptide YY. The rank order of affinity of this receptor for pancreatic polypeptides is NPY &gt; [Pro-34] PYY, PYY and [Leu-31, Pro-34] NPY &gt; NPY (2-36) &gt; [Ile-31, Gln-34] PP and PYY (3-36) &gt; PP &gt; NPY free acid. This Homo sapiens (Human) protein is Neuropeptide Y receptor type 1 (NPY1R).